Consider the following 76-residue polypeptide: Acyl carrier protein (76 aa).

Residues 1 to 74 (MFDKLKEIIA…DVVEYITEHT (74 aa)) form the Carrier domain. At Ser-34 the chain carries O-(pantetheine 4'-phosphoryl)serine.

The protein belongs to the acyl carrier protein (ACP) family. 4'-phosphopantetheine is transferred from CoA to a specific serine of apo-ACP by AcpS. This modification is essential for activity because fatty acids are bound in thioester linkage to the sulfhydryl of the prosthetic group.

Its subcellular location is the cytoplasm. It participates in lipid metabolism; fatty acid biosynthesis. In terms of biological role, carrier of the growing fatty acid chain in fatty acid biosynthesis. This Clostridium perfringens (strain ATCC 13124 / DSM 756 / JCM 1290 / NCIMB 6125 / NCTC 8237 / Type A) protein is Acyl carrier protein.